The following is a 347-amino-acid chain: tRNA dimethylallyltransferase (347 aa).

20 to 27 (GPTASGKT) serves as a coordination point for ATP. 22–27 (TASGKT) lines the substrate pocket. Interaction with substrate tRNA stretches follow at residues 45 to 48 (DSAM), 169 to 173 (QRLMR), and 275 to 280 (RCVGYR).

This sequence belongs to the IPP transferase family. In terms of assembly, monomer. The cofactor is Mg(2+).

It catalyses the reaction adenosine(37) in tRNA + dimethylallyl diphosphate = N(6)-dimethylallyladenosine(37) in tRNA + diphosphate. Functionally, catalyzes the transfer of a dimethylallyl group onto the adenine at position 37 in tRNAs that read codons beginning with uridine, leading to the formation of N6-(dimethylallyl)adenosine (i(6)A). The sequence is that of tRNA dimethylallyltransferase from Marinobacter nauticus (strain ATCC 700491 / DSM 11845 / VT8) (Marinobacter aquaeolei).